Reading from the N-terminus, the 178-residue chain is ATP synthase subunit delta (178 aa).

Belongs to the ATPase delta chain family. As to quaternary structure, F-type ATPases have 2 components, F(1) - the catalytic core - and F(0) - the membrane proton channel. F(1) has five subunits: alpha(3), beta(3), gamma(1), delta(1), epsilon(1). F(0) has three main subunits: a(1), b(2) and c(10-14). The alpha and beta chains form an alternating ring which encloses part of the gamma chain. F(1) is attached to F(0) by a central stalk formed by the gamma and epsilon chains, while a peripheral stalk is formed by the delta and b chains.

The protein localises to the cell inner membrane. In terms of biological role, f(1)F(0) ATP synthase produces ATP from ADP in the presence of a proton or sodium gradient. F-type ATPases consist of two structural domains, F(1) containing the extramembraneous catalytic core and F(0) containing the membrane proton channel, linked together by a central stalk and a peripheral stalk. During catalysis, ATP synthesis in the catalytic domain of F(1) is coupled via a rotary mechanism of the central stalk subunits to proton translocation. Functionally, this protein is part of the stalk that links CF(0) to CF(1). It either transmits conformational changes from CF(0) to CF(1) or is implicated in proton conduction. This is ATP synthase subunit delta from Nitrosococcus oceani (strain ATCC 19707 / BCRC 17464 / JCM 30415 / NCIMB 11848 / C-107).